The following is a 343-amino-acid chain: Single-pass membrane and coiled-coil domain-containing protein 2 (343 aa).

Basic and acidic residues predominate over residues Glu86–Thr99. A disordered region spans residues Glu86–Ser108. Residues Thr152 to Glu238 adopt a coiled-coil conformation. Residues Ile284–Gly304 form a helical membrane-spanning segment.

The protein resides in the membrane. The protein is Single-pass membrane and coiled-coil domain-containing protein 2 (SMCO2) of Homo sapiens (Human).